The primary structure comprises 383 residues: Lipid-A-disaccharide synthase (383 aa).

It belongs to the LpxB family.

It carries out the reaction a lipid X + a UDP-2-N,3-O-bis[(3R)-3-hydroxyacyl]-alpha-D-glucosamine = a lipid A disaccharide + UDP + H(+). It participates in bacterial outer membrane biogenesis; LPS lipid A biosynthesis. Condensation of UDP-2,3-diacylglucosamine and 2,3-diacylglucosamine-1-phosphate to form lipid A disaccharide, a precursor of lipid A, a phosphorylated glycolipid that anchors the lipopolysaccharide to the outer membrane of the cell. In Anaeromyxobacter dehalogenans (strain 2CP-C), this protein is Lipid-A-disaccharide synthase.